We begin with the raw amino-acid sequence, 60 residues long: UPF0434 protein Dtpsy_1553 (60 aa).

This sequence belongs to the UPF0434 family.

This is UPF0434 protein Dtpsy_1553 from Acidovorax ebreus (strain TPSY) (Diaphorobacter sp. (strain TPSY)).